A 739-amino-acid polypeptide reads, in one-letter code: Phosphoribosylformylglycinamidine synthase subunit PurL (739 aa).

Histidine 53 is a catalytic residue. Positions 56 and 95 each coordinate ATP. Position 97 (glutamate 97) interacts with Mg(2+). Residues 98–101 and arginine 120 contribute to the substrate site; that span reads SHNH. The active-site Proton acceptor is histidine 99. Aspartate 121 contacts Mg(2+). Glutamine 244 lines the substrate pocket. Aspartate 274 contacts Mg(2+). 318 to 320 lines the substrate pocket; sequence ESQ. 2 residues coordinate ATP: aspartate 501 and glycine 538. Residue asparagine 539 coordinates Mg(2+). Serine 541 is a substrate binding site.

It belongs to the FGAMS family. As to quaternary structure, monomer. Part of the FGAM synthase complex composed of 1 PurL, 1 PurQ and 2 PurS subunits.

It is found in the cytoplasm. The enzyme catalyses N(2)-formyl-N(1)-(5-phospho-beta-D-ribosyl)glycinamide + L-glutamine + ATP + H2O = 2-formamido-N(1)-(5-O-phospho-beta-D-ribosyl)acetamidine + L-glutamate + ADP + phosphate + H(+). Its pathway is purine metabolism; IMP biosynthesis via de novo pathway; 5-amino-1-(5-phospho-D-ribosyl)imidazole from N(2)-formyl-N(1)-(5-phospho-D-ribosyl)glycinamide: step 1/2. In terms of biological role, part of the phosphoribosylformylglycinamidine synthase complex involved in the purines biosynthetic pathway. Catalyzes the ATP-dependent conversion of formylglycinamide ribonucleotide (FGAR) and glutamine to yield formylglycinamidine ribonucleotide (FGAM) and glutamate. The FGAM synthase complex is composed of three subunits. PurQ produces an ammonia molecule by converting glutamine to glutamate. PurL transfers the ammonia molecule to FGAR to form FGAM in an ATP-dependent manner. PurS interacts with PurQ and PurL and is thought to assist in the transfer of the ammonia molecule from PurQ to PurL. The protein is Phosphoribosylformylglycinamidine synthase subunit PurL of Listeria monocytogenes serotype 4b (strain F2365).